We begin with the raw amino-acid sequence, 104 residues long: Succinate dehydrogenase assembly factor 4, mitochondrial (104 aa).

The transit peptide at 1 to 30 directs the protein to the mitochondrion; that stretch reads MVSTTLSVSRMTFVWRAARPSLLNHSLRKM. The disordered stretch occupies residues 29–104; sequence KMSYQEGKPE…WERKGRCIDF (76 aa). Composition is skewed to basic and acidic residues over residues 63–83 and 91–104; these read EREP…EKGG and RYGD…CIDF.

Belongs to the SDHAF4 family. In terms of assembly, interacts with Sdha in its FAD-bound form.

Its subcellular location is the mitochondrion matrix. Its function is as follows. Plays an essential role in the assembly of succinate dehydrogenase (SDH), an enzyme complex (also referred to as respiratory complex II) that is a component of both the tricarboxylic acid (TCA) cycle and the mitochondrial electron transport chain, and which couples the oxidation of succinate to fumarate with the reduction of ubiquinone (coenzyme Q) to ubiquinol. Binds to the flavoprotein subunit Sdha in its FAD-bound form, blocking the generation of excess reactive oxygen species (ROS) and facilitating its assembly with the iron-sulfur protein subunit Sdhb into the SDH catalytic dimer. This chain is Succinate dehydrogenase assembly factor 4, mitochondrial, found in Mus musculus (Mouse).